A 680-amino-acid chain; its full sequence is DNA-directed RNA polymerase subunit beta' (680 aa).

Residues C69, C71, C87, and C90 each contribute to the Zn(2+) site. Residues D489, D491, and D493 each coordinate Mg(2+).

Belongs to the RNA polymerase beta' chain family. RpoC1 subfamily. In plastids the minimal PEP RNA polymerase catalytic core is composed of four subunits: alpha, beta, beta', and beta''. When a (nuclear-encoded) sigma factor is associated with the core the holoenzyme is formed, which can initiate transcription. Requires Mg(2+) as cofactor. It depends on Zn(2+) as a cofactor.

It localises to the plastid. The protein localises to the chloroplast. The enzyme catalyses RNA(n) + a ribonucleoside 5'-triphosphate = RNA(n+1) + diphosphate. DNA-dependent RNA polymerase catalyzes the transcription of DNA into RNA using the four ribonucleoside triphosphates as substrates. This chain is DNA-directed RNA polymerase subunit beta', found in Ranunculus macranthus (Large buttercup).